We begin with the raw amino-acid sequence, 249 residues long: UPF0309 protein GTNG_1302 (249 aa).

One can recognise an SIS domain in the interval 31–214; it reads VSKAVQNGGI…ALMAENGVEP (184 aa).

It belongs to the UPF0309 family.

The chain is UPF0309 protein GTNG_1302 from Geobacillus thermodenitrificans (strain NG80-2).